Consider the following 313-residue polypeptide: Formimidoylglutamase (313 aa).

Residues His130, Asp155, His157, Asp159, Asp241, and Asp243 each coordinate Mn(2+).

The protein belongs to the arginase family. It depends on Mn(2+) as a cofactor.

It catalyses the reaction N-formimidoyl-L-glutamate + H2O = formamide + L-glutamate. It participates in amino-acid degradation; L-histidine degradation into L-glutamate; L-glutamate from N-formimidoyl-L-glutamate (hydrolase route): step 1/1. Its function is as follows. Catalyzes the conversion of N-formimidoyl-L-glutamate to L-glutamate and formamide. The chain is Formimidoylglutamase from Salmonella heidelberg (strain SL476).